The following is a 122-amino-acid chain: MIQPQTRLKVADNTGAKEIMCIRLEGGSNRKFSNVGDVIVASVKSATPGGVVKKGEVVKAVIVRTKKGIARKDGTYIRFDDNAAVIIRDDKQPRGTRIFGPVARELREKDFMKIISLAPEVL.

It belongs to the universal ribosomal protein uL14 family. In terms of assembly, part of the 50S ribosomal subunit. Forms a cluster with proteins L3 and L19. In the 70S ribosome, L14 and L19 interact and together make contacts with the 16S rRNA in bridges B5 and B8.

Binds to 23S rRNA. Forms part of two intersubunit bridges in the 70S ribosome. The protein is Large ribosomal subunit protein uL14 of Thermoanaerobacter pseudethanolicus (strain ATCC 33223 / 39E) (Clostridium thermohydrosulfuricum).